The sequence spans 203 residues: Peptide deformylase (203 aa).

Fe cation contacts are provided by cysteine 121 and histidine 163. The active site involves glutamate 164. Histidine 167 is a binding site for Fe cation.

Belongs to the polypeptide deformylase family. Fe(2+) is required as a cofactor.

It catalyses the reaction N-terminal N-formyl-L-methionyl-[peptide] + H2O = N-terminal L-methionyl-[peptide] + formate. Its function is as follows. Removes the formyl group from the N-terminal Met of newly synthesized proteins. Requires at least a dipeptide for an efficient rate of reaction. N-terminal L-methionine is a prerequisite for activity but the enzyme has broad specificity at other positions. The chain is Peptide deformylase from Prochlorococcus marinus (strain SARG / CCMP1375 / SS120).